Consider the following 474-residue polypeptide: 2-succinylbenzoate--CoA ligase (474 aa).

Belongs to the ATP-dependent AMP-binding enzyme family. MenE subfamily.

It catalyses the reaction 2-succinylbenzoate + ATP + CoA = 2-succinylbenzoyl-CoA + AMP + diphosphate. The protein operates within quinol/quinone metabolism; 1,4-dihydroxy-2-naphthoate biosynthesis; 1,4-dihydroxy-2-naphthoate from chorismate: step 5/7. It functions in the pathway quinol/quinone metabolism; menaquinone biosynthesis. Functionally, converts 2-succinylbenzoate (OSB) to 2-succinylbenzoyl-CoA (OSB-CoA). The protein is 2-succinylbenzoate--CoA ligase of Staphylococcus epidermidis (strain ATCC 35984 / DSM 28319 / BCRC 17069 / CCUG 31568 / BM 3577 / RP62A).